A 182-amino-acid polypeptide reads, in one-letter code: WUSCHEL-related homeobox 5 (182 aa).

Residues 1-24 form a disordered region; that stretch reads MSFSVKGRSLRGNNNGGTGTKCGR. Positions 20–84 form a DNA-binding region, homeobox; WUS-type; it reads TKCGRWNPTV…NHKARERQKR (65 aa).

The protein belongs to the WUS homeobox family. Specifically expressed in the central cells of a quiescent center (QC) of the root.

The protein resides in the nucleus. Transcription factor, which may be involved in the specification and maintenance of the stem cells (QC cells) in the root apical meristem (RAM). This Arabidopsis thaliana (Mouse-ear cress) protein is WUSCHEL-related homeobox 5 (WOX5).